The sequence spans 141 residues: Large ribosomal subunit protein uL16 (141 aa).

Belongs to the universal ribosomal protein uL16 family. As to quaternary structure, part of the 50S ribosomal subunit.

In terms of biological role, binds 23S rRNA and is also seen to make contacts with the A and possibly P site tRNAs. The protein is Large ribosomal subunit protein uL16 of Hydrogenobaculum sp. (strain Y04AAS1).